Reading from the N-terminus, the 363-residue chain is Autophagy-related protein 3 (363 aa).

Composition is skewed to basic and acidic residues over residues 84-106 (DFAGDAGHDETVVRDGEDFRGDG) and 129-138 (ARVRDVRTVD). The tract at residues 84–171 (DFAGDAGHDE…DDEAIIRDPK (88 aa)) is flexible region. Positions 84–174 (DFAGDAGHDE…AIIRDPKADN (91 aa)) are disordered. A compositionally biased stretch (acidic residues) spans 139-164 (ESGEMGEREDDEDDIPDMEDDDDDDE). Residue Cys-247 is the Glycyl thioester intermediate of the active site. The tract at residues 251–339 (SVMKTLLDRA…EEEVAIRVDQ (89 aa)) is handle region.

The protein belongs to the ATG3 family. In terms of assembly, monomer. Interacts with atg8 through an intermediate thioester bond through the C-terminal Gly of atg8. Interacts with the C-terminal region of the E1-like atg7 enzyme. Also interacts with the atg12-atg5 conjugate.

It is found in the cytoplasm. In terms of biological role, E2 conjugating enzyme required for the cytoplasm to vacuole transport (Cvt) and autophagy. Required for selective autophagic degradation of the nucleus (nucleophagy) as well as for mitophagy which contributes to regulate mitochondrial quantity and quality by eliminating the mitochondria to a basal level to fulfill cellular energy requirements and preventing excess ROS production. Responsible for the E2-like covalent binding of phosphatidylethanolamine to the C-terminal Gly of atg8. The atg12-atg5 conjugate plays a role of an E3 and promotes the transfer of atg8 from atg3 to phosphatidylethanolamine (PE). This step is required for the membrane association of atg8. The formation of the atg8-phosphatidylethanolamine conjugate is essential for autophagy and for the cytoplasm to vacuole transport (Cvt). The atg8-PE conjugate mediates tethering between adjacent membranes and stimulates membrane hemifusion, leading to expansion of the autophagosomal membrane during autophagy. Required for normal mycelial growth and conidiogenesis, and regulates sclerotial formation. Plays an essential role in pathogenesis. This chain is Autophagy-related protein 3, found in Botryotinia fuckeliana (strain BcDW1) (Noble rot fungus).